Reading from the N-terminus, the 194-residue chain is MDFILNISMKMEVIFKTDLRSSSQVVFHAGSLYNWFSVEIINSGRIVTTAIKTLLSTVKYDIVKSAHIYAGQGYTEHQAQEEWNMILHVLFEEETESSASSESIHEKNDNETNECTSSFETLFEQEPSSEEPKDSKLYMLAQKTVQHIEQYGKAPDFNKVIRAHNFIQTIHGTPLKEEEKEVVRLMVIKLLKKK.

This sequence belongs to the asfivirus phosphoprotein p30 family. In terms of assembly, oligomer. Interacts with host HNRNPK. In terms of processing, phosphorylated on serine residues in the 115 N-terminal amino acids.

The protein localises to the host cytoplasm. It is found in the host nucleus. Its subcellular location is the virion. In terms of biological role, modifies the subcellular distribution of heterogeneous nuclear ribonucleoprotein K (HNRNPK) and may contribute to modulate HNRNPK functions related to processing and export of mRNAs during ASFV infection. Necessary for virus internalization. This is Phosphoprotein p30 from Ornithodoros (relapsing fever ticks).